Reading from the N-terminus, the 105-residue chain is N(4)-acetylcytidine amidohydrolase (105 aa).

The ASCH domain occupies 7-93 (TFFERFEHDI…VIAEIYPGLE (87 aa)). K21 acts as the Proton acceptor in catalysis. T24 functions as the Nucleophile in the catalytic mechanism. The Proton donor role is filled by E74.

The protein belongs to the N(4)-acetylcytidine amidohydrolase family.

The enzyme catalyses N(4)-acetylcytidine + H2O = cytidine + acetate + H(+). It carries out the reaction N(4)-acetyl-2'-deoxycytidine + H2O = 2'-deoxycytidine + acetate + H(+). It catalyses the reaction N(4)-acetylcytosine + H2O = cytosine + acetate + H(+). In terms of biological role, catalyzes the hydrolysis of N(4)-acetylcytidine (ac4C). This Shewanella baltica (strain OS185) protein is N(4)-acetylcytidine amidohydrolase.